A 468-amino-acid chain; its full sequence is O-methyltransferase lcsG (468 aa).

Residues 1–12 (MGDNVQSDTTAA) are compositionally biased toward polar residues. Residues 1 to 29 (MGDNVQSDTTAAQAGITDAPTAPTSAPVS) form a disordered region. Residues 298-299 (GG), D321, 348-349 (DF), and K363 each bind S-adenosyl-L-methionine.

This sequence belongs to the class I-like SAM-binding methyltransferase superfamily. Cation-independent O-methyltransferase family.

It participates in secondary metabolite biosynthesis. O-methyltransferase; part of the gene cluster that mediates the biosynthesis of the lipopeptide antibiotics leucinostatins that show extensive biological activities, including antimalarial, antiviral, antibacterial, antifungal, and antitumor activities, as well as phytotoxic. Leucinostatin A contains nine amino acid residues, including the unusual amino acid 4-methyl-L-proline (MePro), 2-amino-6-hydroxy-4-methyl-8-oxodecanoic acid (AHyMeOA), 3-hydroxyleucine (HyLeu), alpha-aminoisobutyric acid (AIB), beta-Ala, a 4-methylhex-2-enoic acid at the N-terminus as well as a N1,N1-dimethylpropane-1,2-diamine (DPD) at the C-terminus. The biosynthesis of leucinostatins is probably initiated with the assembly of 4-methylhex-2-enoic acid by a reducing PKS. Two reducing polyketide synthases, lcsB and lcsC, have been identified in the cluster and it is not clear which is the one that assembles 4-methylhex-2-enoic acid since both contain KS, AT, DH, cMT, ER, KR and ACP domains. The polyketide residue might be transferred to the NRPS lcsA, mediated by two additional enzymes, the acyl-CoA ligase lcsD and the thioesterase lcsE. The linear polyketide carboxylic acid, which is released from PKS, is converted to a CoA thioester by lcsD, and then lcsE hydrolyzes the thiol bond and shuttles the polyketide intermediate to lcsA. The C domain of the first module catalyzed the condensation of 4-methylhex-2-enoic acid and MePro carried by domain A1, followed by successive condensations of nine amino acids to trigger the elongation of the linear peptide. A5 and A6 domains of lcsA are proposed to incorporate leucine, A2 AHyMeOA, and A3 incorporates HyLeu. A4, A7 and A8 incorporate AIB. The AHyMeOA in leucinostatin A activated by the A2 might be produced by the second PKS (lcsB or lcsC) present within the cluster. The MePro is probably produced via leucine cyclization and may originate from a separate pathway, independent of the cluster. Another nonproteinogenic amino acid, beta-Ala, could be produced by an aspartic acid decarboxylase also localized outside of the cluster. Two candidates are VFPBJ_01400 and VFPBJ_10476. The final peptide scaffold may be released by the NAD(P)H-dependent thioester reductase (TE) at the C-terminal region of lcsA. Transamination of the lcsA product by the transaminase lcsP may produce DPD at the C-terminus. Further hydroxylation steps performed alternatively by the cytochrome P450 monooxygenases lcsI, lcsK and lcsN then yield the non-methylated leucinostatins precursor. It is also possible that leucines can be hydroxylated prior to their incorporation into the peptide. Varying extents of methylation then lead to the formation of leucinostatins A and B. In Purpureocillium lilacinum (Paecilomyces lilacinus), this protein is O-methyltransferase lcsG.